A 499-amino-acid chain; its full sequence is Aprataxin and PNK-like factor (499 aa).

In terms of domain architecture, FHA-like spans 1 to 108 (MPSDFFLQPL…RVFSAESEVE (108 aa)). Position 116 is a phosphoserine; by ATM (Ser-116). 3 disordered regions span residues 134–183 (VNLP…TQRK), 197–292 (DQSL…KTNK), and 305–358 (VSKH…DTAD). Residues 141–152 (TGASQLQGSPEI) show a composition bias toward polar residues. Ser-149 is subject to Phosphoserine. The KBM signature appears at 182-191 (RKRILPAWML). The span at 239 to 248 (PSGNSKSVSA) shows a compositional bias: polar residues. The segment covering 251-261 (DPGKKCRKADQ) has biased composition (basic and acidic residues). A compositionally biased stretch (low complexity) spans 264 to 278 (PGVSSENVPESSSSN). Positions 281–292 (KDPDVDIVKTNK) are enriched in basic and acidic residues. Positions 340 to 349 (PESSSAPSSP) are enriched in low complexity. 4 residues coordinate a glycoprotein: Arg-371, Tyr-376, Tyr-381, and Arg-382. The segment at 372-393 (TACMYGANCYRRNPLHFQHFSH) adopts a PBZ-type 1 zinc-finger fold. Residues 401–411 (EVHGTDEGVIG) form a flexible linker region. Residues 414–435 (PECPYGASCYRKNPQHKMEYRH) form a PBZ-type 2 zinc finger. Residues Tyr-418, Tyr-423, and Arg-424 each coordinate a glycoprotein. The disordered stretch occupies residues 440–499 (ARVALDEDDDDVGQPSDDEDEEDYEPTDEDSDWHPGKDDEEQEDVDELLKEAKSSLHLKH). The span at 445 to 470 (DEDDDDVGQPSDDEDEEDYEPTDEDS) shows a compositional bias: acidic residues. The NAP1L motif signature appears at 463–487 (YEPTDEDSDWHPGKDDEEQEDVDEL).

This sequence belongs to the APLF family. Interacts with LIG4. Interacts with PARP1. Interacts with XRCC4. Interacts (via KBM motif) with XRCC5 and XRCC6; promoting recruitment to DNA damage sites. Interacts with XRCC1. Interacts (via C-terminal disordered region) with histones; interacts with histone H2A, H2B and H3-H4. Post-translationally, poly-ADP-ribosylated. In addition to binding non covalently poly-ADP-ribose via its PBZ-type zinc fingers, the protein is also covalently poly-ADP-ribosylated by PARP1. In terms of processing, phosphorylated in an ATM-dependent manner upon double-strand DNA break.

The protein resides in the nucleus. The protein localises to the chromosome. It localises to the cytoplasm. Its subcellular location is the cytosol. Its function is as follows. Histone chaperone involved in single-strand and double-strand DNA break repair. Recruited to sites of DNA damage through interaction with branched poly-ADP-ribose chains, a polymeric post-translational modification synthesized transiently at sites of chromosomal damage to accelerate DNA strand break repair reactions. Following recruitment to DNA damage sites, acts as a histone chaperone that mediates histone eviction during DNA repair and promotes recruitment of histone variant MACROH2A1. Also has a nuclease activity: displays apurinic-apyrimidinic (AP) endonuclease and 3'-5' exonuclease activities in vitro. Also able to introduce nicks at hydroxyuracil and other types of pyrimidine base damage. Together with PARP3, promotes the retention of the LIG4-XRCC4 complex on chromatin and accelerate DNA ligation during non-homologous end-joining (NHEJ). Also acts as a negative regulator of cell pluripotency by promoting histone exchange. Required for the embryo implantation during the epithelial to mesenchymal transition in females. The chain is Aprataxin and PNK-like factor (Aplf) from Mus musculus (Mouse).